We begin with the raw amino-acid sequence, 317 residues long: Melanocyte-stimulating hormone receptor (317 aa).

The Extracellular portion of the chain corresponds to 1–37; it reads MPLQGPQRRLLGSLNSTLPATPYLGLTTNQTEPPCLE. Asparagine 29 carries an N-linked (GlcNAc...) asparagine glycan. Residues 38-63 traverse the membrane as a helical segment; sequence VSIPDGLFLSLGLVSLVENVLVVTAI. Residues 64–72 lie on the Cytoplasmic side of the membrane; that stretch reads AKNRNLHSP. Residues 73 to 93 traverse the membrane as a helical segment; sequence MYYFICCLAVSDLLVSMSNVL. Over 94-118 the chain is Extracellular; the sequence is EMAILLLLEAGVLATQASVLQQLDN. A helical transmembrane segment spans residues 119–140; that stretch reads IIDVLICGSMVSSLCFLGSIAV. Residues 141–163 lie on the Cytoplasmic side of the membrane; the sequence is DRYISIFYALRYHSIMMLPRVWR. The helical transmembrane segment at 164–183 threads the bilayer; the sequence is AIVAIWVVSVLSSTLFIAYY. The Extracellular portion of the chain corresponds to 184 to 191; it reads NHTAVLLC. A helical membrane pass occupies residues 192–211; it reads LVTFFVAMLVLMAVLYVHML. At 212 to 240 the chain is on the cytoplasmic side; it reads ARACQHARGIARLHKRQHPIHQGFGLKGA. Residues 241–266 traverse the membrane as a helical segment; the sequence is ATLTILLGVFFLCWGPFFLHLSLLIL. Residues 267–279 lie on the Extracellular side of the membrane; that stretch reads CPQHPTCGCVFKN. Residues 280–300 form a helical membrane-spanning segment; sequence FKLFLTLILCSAIVDPLIYAF. The Cytoplasmic portion of the chain corresponds to 301 to 317; sequence RSQELRKTLQEVLLCSW. Cysteine 315 carries S-palmitoyl cysteine lipidation.

This sequence belongs to the G-protein coupled receptor 1 family. As to quaternary structure, interacts with MGRN1, but does not undergo MGRN1-mediated ubiquitination; this interaction competes with GNAS-binding and thus inhibits agonist-induced cAMP production. Interacts with OPN3; the interaction results in a decrease in MC1R-mediated cAMP signaling and ultimately a decrease in melanin production in melanocytes.

The protein resides in the cell membrane. Its function is as follows. Receptor for MSH (alpha, beta and gamma) and ACTH. The activity of this receptor is mediated by G proteins which activate adenylate cyclase. Mediates melanogenesis, the production of eumelanin (black/brown) and phaeomelanin (red/yellow), via regulation of cAMP signaling in melanocytes. The chain is Melanocyte-stimulating hormone receptor (MC1R) from Equus caballus (Horse).